The primary structure comprises 320 residues: Ribosomal RNA small subunit methyltransferase H (320 aa).

Residues 42–44, Asp-62, Phe-86, Asp-108, and Gln-115 contribute to the S-adenosyl-L-methionine site; that span reads GGH.

The protein belongs to the methyltransferase superfamily. RsmH family.

The protein localises to the cytoplasm. It carries out the reaction cytidine(1402) in 16S rRNA + S-adenosyl-L-methionine = N(4)-methylcytidine(1402) in 16S rRNA + S-adenosyl-L-homocysteine + H(+). Specifically methylates the N4 position of cytidine in position 1402 (C1402) of 16S rRNA. The sequence is that of Ribosomal RNA small subunit methyltransferase H from Yersinia pseudotuberculosis serotype O:1b (strain IP 31758).